The following is a 1537-amino-acid chain: Dual oxidase (1537 aa).

Residues 1–29 (MSVPSAPHQRAESKNRVPRPGQKNRKLPK) form a disordered region. Residues 1-626 (MSVPSAPHQR…EGYDYFSGSE (626 aa)) lie on the Extracellular side of the membrane. The segment at 63 to 628 (MYSQTEKQRY…YDYFSGSELM (566 aa)) is peroxidase-like; mediates peroxidase activity. 4 N-linked (GlcNAc...) asparagine glycosylation sites follow: Asn133, Asn233, Asn577, and Asn606. Residues 627–647 (LMFIYVCVFLGFVPILCAGAG) traverse the membrane as a helical segment. Topologically, residues 648–1029 (YCVVKLQNSK…ITFLEENRQN (382 aa)) are cytoplasmic. Residue Ser826 is modified to Phosphoserine. EF-hand domains follow at residues 855–890 (PNDMFVRKMFNIVDKDQDGRISFQEFLETVVLFSRG), 891–926 (KTDDKLRIIFDMCDNDRNGVIDKGELSEMMRSLVEI), and 936–971 (QVTELIDGMFQDVGLEHKNHLTYQDFKLMMKEYKGD). Ca(2+) is bound by residues Asp868, Asp870, Asp872, Arg874, Glu879, Asp904, Asp906, Asn908, and Glu915. A helical membrane pass occupies residues 1030-1050 (IFYLFLFYVVTIVLFVERFIH). Topologically, residues 1051 to 1065 (YSFMAEHTDLRHIMG) are extracellular. The helical transmembrane segment at 1066-1086 (VGIAITRGSAASLSFCYSLLL) threads the bilayer. The region spanning 1078-1218 (LSFCYSLLLL…TLYIGLYLLS (141 aa)) is the Ferric oxidoreductase domain. Topologically, residues 1087–1116 (LTMSRNLITKLKEFPIQQYIPLDSHIQFHK) are cytoplasmic. The residue at position 1105 (Tyr1105) is a Phosphotyrosine. A helical membrane pass occupies residues 1117–1137 (IAACTALFFSVLHTVGHIVNF). Over 1138–1171 (YHVSTQSHENLRCLTREVHFASDYKPDITFWLFQ) the chain is Extracellular. A helical membrane pass occupies residues 1172–1192 (TVTGTTGVMLFIIMCIIFVFA). The Cytoplasmic portion of the chain corresponds to 1193 to 1202 (HPTIRKKAYN). Residues 1203–1223 (FFWNMHTLYIGLYLLSLIHGL) traverse the membrane as a helical segment. Residues 1224-1230 (ARLTGPP) lie on the Extracellular side of the membrane. A helical transmembrane segment spans residues 1231–1251 (RFWMFFLGPGIVYTLDKIVSL). The Cytoplasmic segment spans residues 1252–1537 (RTKYMALDVI…YFIHHFENFG (286 aa)). The 106-residue stretch at 1253-1358 (TKYMALDVID…EGPFGGGNQD (106 aa)) folds into the FAD-binding FR-type domain.

In the N-terminal section; belongs to the peroxidase family.

The protein localises to the membrane. It catalyses the reaction NADH + O2 + H(+) = H2O2 + NAD(+). The enzyme catalyses NADPH + O2 + H(+) = H2O2 + NADP(+). With respect to regulation, peroxidase activity is inhibited by aminotriazole and azide. Functionally, plays a role in innate immunity limiting microbial proliferation in the gut. Acts downstream of a hh-signaling pathway to induce the production of reactive oxygen species (ROS) in response to intestinal bacterial infection. May generate antimicrobial oxidative burst through its peroxidase-like domain. This chain is Dual oxidase (Duox), found in Drosophila melanogaster (Fruit fly).